Here is a 790-residue protein sequence, read N- to C-terminus: Phenylalanine--tRNA ligase beta subunit (790 aa).

Residues 39 to 147 (AKPFSGIVVG…ADAPVGVDVR (109 aa)) form the tRNA-binding domain. Positions 400–476 (PAKALVNLRH…RLYGYNKLPV (77 aa)) constitute a B5 domain. Mg(2+) is bound by residues Asp-454, Asp-460, Glu-463, and Glu-464. One can recognise an FDX-ACB domain in the interval 696 to 789 (SRFPEIRRDL…LGNRFGASLR (94 aa)).

The protein belongs to the phenylalanyl-tRNA synthetase beta subunit family. Type 1 subfamily. In terms of assembly, tetramer of two alpha and two beta subunits. It depends on Mg(2+) as a cofactor.

It is found in the cytoplasm. It catalyses the reaction tRNA(Phe) + L-phenylalanine + ATP = L-phenylalanyl-tRNA(Phe) + AMP + diphosphate + H(+). The sequence is that of Phenylalanine--tRNA ligase beta subunit from Hahella chejuensis (strain KCTC 2396).